Here is a 556-residue protein sequence, read N- to C-terminus: ATP synthase subunit beta-1, mitochondrial (556 aa).

Low complexity predominate over residues 1 to 20 (MASRRVLSSLLRSSSGRSAA). The disordered stretch occupies residues 1-37 (MASRRVLSSLLRSSSGRSAAKLGNRNPRLPSPSPARH). The transit peptide at 1–51 (MASRRVLSSLLRSSSGRSAAKLGNRNPRLPSPSPARHAAPCSYLLGRVAEY) directs the protein to the mitochondrion. At Ser-59 the chain carries Phosphoserine. 231 to 238 (GGAGVGKT) is a binding site for ATP.

The protein belongs to the ATPase alpha/beta chains family. F-type ATPases have 2 components, CF(1) - the catalytic core - and CF(0) - the membrane proton channel. CF(1) has five subunits: alpha(3), beta(3), gamma(1), delta(1), epsilon(1). CF(0) has three main subunits: a, b and c.

Its subcellular location is the mitochondrion. It localises to the mitochondrion inner membrane. It carries out the reaction ATP + H2O + 4 H(+)(in) = ADP + phosphate + 5 H(+)(out). In terms of biological role, mitochondrial membrane ATP synthase (F(1)F(0) ATP synthase or Complex V) produces ATP from ADP in the presence of a proton gradient across the membrane which is generated by electron transport complexes of the respiratory chain. F-type ATPases consist of two structural domains, F(1) - containing the extramembraneous catalytic core, and F(0) - containing the membrane proton channel, linked together by a central stalk and a peripheral stalk. During catalysis, ATP synthesis in the catalytic domain of F(1) is coupled via a rotary mechanism of the central stalk subunits to proton translocation. Subunits alpha and beta form the catalytic core in F(1). Rotation of the central stalk against the surrounding alpha(3)beta(3) subunits leads to hydrolysis of ATP in three separate catalytic sites on the beta subunits. This Arabidopsis thaliana (Mouse-ear cress) protein is ATP synthase subunit beta-1, mitochondrial.